A 354-amino-acid chain; its full sequence is Ion-translocating oxidoreductase complex subunit D (354 aa).

Transmembrane regions (helical) follow at residues 9-28 (IMLH…LYLF), 67-87 (LLSG…WIAV), and 117-137 (VALL…LPLG). T165 carries the post-translational modification FMN phosphoryl threonine. Helical transmembrane passes span 200 to 220 (GSLG…LLAL), 222 to 242 (IIHW…AALA), 249 to 269 (VHGG…ALFI), 277 to 297 (PISR…VFVI), and 301 to 321 (GNFP…VPLI).

Belongs to the NqrB/RnfD family. As to quaternary structure, the complex is composed of six subunits: RnfA, RnfB, RnfC, RnfD, RnfE and RnfG. The cofactor is FMN.

It localises to the cell inner membrane. Part of a membrane-bound complex that couples electron transfer with translocation of ions across the membrane. The chain is Ion-translocating oxidoreductase complex subunit D from Stutzerimonas stutzeri (Pseudomonas stutzeri).